The following is a 306-amino-acid chain: UDP-3-O-acyl-N-acetylglucosamine deacetylase (306 aa).

Zn(2+) is bound by residues histidine 79, histidine 239, and aspartate 243. Catalysis depends on histidine 266, which acts as the Proton donor.

The protein belongs to the LpxC family. It depends on Zn(2+) as a cofactor.

It catalyses the reaction a UDP-3-O-[(3R)-3-hydroxyacyl]-N-acetyl-alpha-D-glucosamine + H2O = a UDP-3-O-[(3R)-3-hydroxyacyl]-alpha-D-glucosamine + acetate. It functions in the pathway glycolipid biosynthesis; lipid IV(A) biosynthesis; lipid IV(A) from (3R)-3-hydroxytetradecanoyl-[acyl-carrier-protein] and UDP-N-acetyl-alpha-D-glucosamine: step 2/6. Catalyzes the hydrolysis of UDP-3-O-myristoyl-N-acetylglucosamine to form UDP-3-O-myristoylglucosamine and acetate, the committed step in lipid A biosynthesis. This Glaesserella parasuis serovar 5 (strain SH0165) (Haemophilus parasuis) protein is UDP-3-O-acyl-N-acetylglucosamine deacetylase.